The following is a 295-amino-acid chain: Light-independent protochlorophyllide reductase iron-sulfur ATP-binding protein (295 aa).

ATP contacts are provided by residues 10 to 15 (GIGKST) and lysine 39. Serine 14 serves as a coordination point for Mg(2+). [4Fe-4S] cluster is bound by residues cysteine 95 and cysteine 129. 180-181 (NR) is an ATP binding site. A compositionally biased stretch (basic and acidic residues) spans 275–289 (TKDKKENKKEDKENS). Residues 275 to 295 (TKDKKENKKEDKENSADFTWL) form a disordered region.

The protein belongs to the NifH/BchL/ChlL family. As to quaternary structure, homodimer. Protochlorophyllide reductase is composed of three subunits; ChlL, ChlN and ChlB. The cofactor is [4Fe-4S] cluster.

It localises to the plastid. Its subcellular location is the chloroplast. It carries out the reaction chlorophyllide a + oxidized 2[4Fe-4S]-[ferredoxin] + 2 ADP + 2 phosphate = protochlorophyllide a + reduced 2[4Fe-4S]-[ferredoxin] + 2 ATP + 2 H2O. The protein operates within porphyrin-containing compound metabolism; chlorophyll biosynthesis (light-independent). Functionally, component of the dark-operative protochlorophyllide reductase (DPOR) that uses Mg-ATP and reduced ferredoxin to reduce ring D of protochlorophyllide (Pchlide) to form chlorophyllide a (Chlide). This reaction is light-independent. The L component serves as a unique electron donor to the NB-component of the complex, and binds Mg-ATP. In Physcomitrium patens (Spreading-leaved earth moss), this protein is Light-independent protochlorophyllide reductase iron-sulfur ATP-binding protein.